The chain runs to 343 residues: Zinc finger CCCH domain-containing protein 39 (343 aa).

Residues 114 to 147 (LSHLADAADEAAALRQENAELRVANNDLACRIAK) are a coiled coil. 2 C3H1-type zinc fingers span residues 268-296 (MFKTELCNKWEETGACPYGDQCQFAHGVA) and 306-334 (RYKTQVCRMVLAGGVCPYGHRCHFRHSIT).

The chain is Zinc finger CCCH domain-containing protein 39 from Oryza sativa subsp. japonica (Rice).